Reading from the N-terminus, the 152-residue chain is Acidic phospholipase A2 (152 aa).

The N-terminal stretch at 1–21 (MNPAHLLVLSAVCVSLLGASS) is a signal peptide. A propeptide spanning residues 22–27 (IPPQPL) is cleaved from the precursor. Intrachain disulfides connect cysteine 38-cysteine 104, cysteine 54-cysteine 151, cysteine 56-cysteine 72, cysteine 71-cysteine 132, cysteine 78-cysteine 125, cysteine 88-cysteine 118, and cysteine 111-cysteine 123. Residues tyrosine 55, glycine 57, and glycine 59 each coordinate Ca(2+). Residue histidine 75 is part of the active site. Aspartate 76 serves as a coordination point for Ca(2+). The active site involves aspartate 126.

This sequence belongs to the phospholipase A2 family. Group I subfamily. D49 sub-subfamily. Ca(2+) is required as a cofactor. In terms of tissue distribution, expressed by the venom gland.

It is found in the secreted. The catalysed reaction is a 1,2-diacyl-sn-glycero-3-phosphocholine + H2O = a 1-acyl-sn-glycero-3-phosphocholine + a fatty acid + H(+). In terms of biological role, PLA2 catalyzes the calcium-dependent hydrolysis of the 2-acyl groups in 3-sn-phosphoglycerides. The sequence is that of Acidic phospholipase A2 from Ophiophagus hannah (King cobra).